We begin with the raw amino-acid sequence, 127 residues long: Mitochondrial pyruvate carrier 2 (127 aa).

Residues 2-40 are Mitochondrial matrix-facing; sequence SAAGARGLRATYHRLLDKVELMLPEKLRPLYNHPAGPRT. The helical transmembrane segment at 41-61 threads the bilayer; it reads VFFWAPIMKRGLVCAGLADMA. At 62–72 the chain is on the mitochondrial intermembrane side; it reads RPAEKLSTAQS. A helical transmembrane segment spans residues 73 to 90; it reads AVLMATGFIWSRYSLVII. Residues 91–95 are Mitochondrial matrix-facing; sequence PKNWS. The chain crosses the membrane as a helical span at residues 96 to 115; the sequence is LFAVNFFVGAAGASQLFRIW. Topologically, residues 116–127 are mitochondrial intermembrane; that stretch reads RYNQELKAKAHK.

It belongs to the mitochondrial pyruvate carrier (MPC) (TC 2.A.105) family. Homodimer. Homooligomer. Forms heterodimers with MPC1 and MPC1L. The heterodimer is the more stable and dominant form.

It is found in the mitochondrion inner membrane. The catalysed reaction is pyruvate(out) + H(+)(out) = pyruvate(in) + H(+)(in). In terms of biological role, mediates the uptake of pyruvate into mitochondria. The polypeptide is Mitochondrial pyruvate carrier 2 (MPC2) (Pongo abelii (Sumatran orangutan)).